Here is a 406-residue protein sequence, read N- to C-terminus: Phosphorylase b kinase gamma catalytic chain, liver/testis isoform (406 aa).

Residues 24–291 enclose the Protein kinase domain; that stretch reads YDPKDVIGRG…AEQALQHPFF (268 aa). Residues 30-38 and Lys-53 contribute to the ATP site; that span reads IGRGVSSVV. The active-site Proton acceptor is the Asp-153. A calmodulin-binding (domain-N) region spans residues 306 to 330; the sequence is QRFRVAVWTVLAAGRVALSAHRIRP. The tract at residues 346–370 is calmodulin-binding (domain-C); it reads VRRLIDNCAFRLYGHWVKKGEQQNR.

Belongs to the protein kinase superfamily. CAMK Ser/Thr protein kinase family. Hexadecamer of 4 heterotetramers, each composed of alpha, beta, gamma, and delta subunits. Alpha (PHKA1 or PHKA2) and beta (PHKB) are regulatory subunits, gamma (PHKG1 or PHKG2) is the catalytic subunit, and delta is calmodulin.

It carries out the reaction 2 ATP + phosphorylase b = 2 ADP + phosphorylase a.. Its function is as follows. Catalytic subunit of the phosphorylase b kinase (PHK), which mediates the neural and hormonal regulation of glycogen breakdown (glycogenolysis) by phosphorylating and thereby activating glycogen phosphorylase. May regulate glycogeneolysis in the testis. In vitro, phosphorylates PYGM. This chain is Phosphorylase b kinase gamma catalytic chain, liver/testis isoform (PHKG2), found in Bos taurus (Bovine).